The chain runs to 335 residues: Methionine import ATP-binding protein MetN 1 (335 aa).

The region spanning 2 to 242 is the ABC transporter domain; the sequence is IEFQNVHKTY…PKHPTTKRFV (241 aa). Position 38 to 45 (38 to 45) interacts with ATP; that stretch reads GHSGAGKS.

The protein belongs to the ABC transporter superfamily. Methionine importer (TC 3.A.1.24) family. In terms of assembly, the complex is composed of two ATP-binding proteins (MetN), two transmembrane proteins (MetI) and a solute-binding protein (MetQ).

The protein localises to the cell inner membrane. The enzyme catalyses L-methionine(out) + ATP + H2O = L-methionine(in) + ADP + phosphate + H(+). It carries out the reaction D-methionine(out) + ATP + H2O = D-methionine(in) + ADP + phosphate + H(+). In terms of biological role, part of the ABC transporter complex MetNIQ involved in methionine import. Responsible for energy coupling to the transport system. The chain is Methionine import ATP-binding protein MetN 1 from Pseudomonas fluorescens (strain Pf0-1).